A 113-amino-acid polypeptide reads, in one-letter code: U11-theraphotoxin-Hhn1a (113 aa).

A signal peptide spans 1-21; the sequence is MNTVRVTFLLVFVLAVSLGQA. Residues 22–74 constitute a propeptide that is removed on maturation; sequence DKDENRMEMQEKTEQGNSYLDFAENLLLQKLEELEAKLLEEDSEESRNSRQKR. Residues 60–69 are compositionally biased toward basic and acidic residues; the sequence is LEEDSEESRN. Positions 60–83 are disordered; it reads LEEDSEESRNSRQKRCIGEGVPCD. Intrachain disulfides connect Cys75–Cys90, Cys82–Cys95, and Cys89–Cys110.

This sequence belongs to the neurotoxin 14 (magi-1) family. 01 (HNTX-16) subfamily. Expressed by the venom gland.

It localises to the secreted. Functionally, probable ion channel inhibitor. The polypeptide is U11-theraphotoxin-Hhn1a (Cyriopagopus hainanus (Chinese bird spider)).